A 271-amino-acid polypeptide reads, in one-letter code: Cell surface glycoprotein CD200 receptor 2 (271 aa).

The signal sequence occupies residues 1–23; sequence MSAPRLLISIIIMVSASSSSCMG. At 24 to 239 the chain is on the extracellular side; it reads GKQMTQNYST…TSGSPALSLL (216 aa). Residues Asn30, Asn39, Asn86, Asn92, Asn189, and Asn217 are each glycosylated (N-linked (GlcNAc...) asparagine). The Ig-like V-type domain occupies 46–132; it reads MDINAVLCCP…YRGIVVTPDG (87 aa). An Ig-like C2-type domain is found at 133–221; the sequence is NFHRGYHLQV…SHLTGNKSLS (89 aa). Cysteines 160 and 209 form a disulfide. A helical membrane pass occupies residues 240–260; the sequence is IILYVKLSLFVVILVTTGFVF. At 261 to 271 the chain is on the cytoplasmic side; sequence FQRINHVRKVL.

The protein belongs to the CD200R family.

The protein resides in the membrane. Functionally, may be a receptor for the CD200/OX2 cell surface glycoprotein. The protein is Cell surface glycoprotein CD200 receptor 2 (CD200R1L) of Homo sapiens (Human).